The following is a 654-amino-acid chain: Acetyl-coenzyme A synthetase (654 aa).

CoA-binding positions include 190–193 (RGGK) and threonine 313. ATP is bound by residues 389–391 (GEP), 413–418 (DTWWQT), aspartate 504, and arginine 519. CoA is bound at residue serine 527. Arginine 530 is an ATP binding site. 3 residues coordinate Mg(2+): valine 541, histidine 543, and valine 546. Lysine 613 carries the post-translational modification N6-acetyllysine.

Belongs to the ATP-dependent AMP-binding enzyme family. The cofactor is Mg(2+). In terms of processing, acetylated. Deacetylation by the SIR2-homolog deacetylase activates the enzyme.

It catalyses the reaction acetate + ATP + CoA = acetyl-CoA + AMP + diphosphate. Catalyzes the conversion of acetate into acetyl-CoA (AcCoA), an essential intermediate at the junction of anabolic and catabolic pathways. AcsA undergoes a two-step reaction. In the first half reaction, AcsA combines acetate with ATP to form acetyl-adenylate (AcAMP) intermediate. In the second half reaction, it can then transfer the acetyl group from AcAMP to the sulfhydryl group of CoA, forming the product AcCoA. The polypeptide is Acetyl-coenzyme A synthetase (Leptospira biflexa serovar Patoc (strain Patoc 1 / Ames)).